We begin with the raw amino-acid sequence, 177 residues long: ATP synthase subunit b (177 aa).

The chain crosses the membrane as a helical span at residues 15-35; sequence GISGGTIIYQLLMFIILLALL.

It belongs to the ATPase B chain family. In terms of assembly, F-type ATPases have 2 components, F(1) - the catalytic core - and F(0) - the membrane proton channel. F(1) has five subunits: alpha(3), beta(3), gamma(1), delta(1), epsilon(1). F(0) has three main subunits: a(1), b(2) and c(10-14). The alpha and beta chains form an alternating ring which encloses part of the gamma chain. F(1) is attached to F(0) by a central stalk formed by the gamma and epsilon chains, while a peripheral stalk is formed by the delta and b chains.

The protein resides in the cell membrane. Its function is as follows. F(1)F(0) ATP synthase produces ATP from ADP in the presence of a proton or sodium gradient. F-type ATPases consist of two structural domains, F(1) containing the extramembraneous catalytic core and F(0) containing the membrane proton channel, linked together by a central stalk and a peripheral stalk. During catalysis, ATP synthesis in the catalytic domain of F(1) is coupled via a rotary mechanism of the central stalk subunits to proton translocation. In terms of biological role, component of the F(0) channel, it forms part of the peripheral stalk, linking F(1) to F(0). The polypeptide is ATP synthase subunit b (Geobacillus kaustophilus (strain HTA426)).